Here is a 119-residue protein sequence, read N- to C-terminus: Beta-2-microglobulin (119 aa).

An N-terminal signal peptide occupies residues 1 to 20; the sequence is MARFVAVALLVLLSLSGLET. The Ig-like C1-type domain occupies 25 to 114; that stretch reads PKIQVYSRHP…VTFSTPKTVK (90 aa). Cys45 and Cys100 form a disulfide bridge.

The protein belongs to the beta-2-microglobulin family. In terms of assembly, heterodimer of an alpha chain and a beta chain. Beta-2-microglobulin is the beta-chain of major histocompatibility complex class I molecules.

The protein localises to the secreted. In terms of biological role, component of the class I major histocompatibility complex (MHC). Involved in the presentation of peptide antigens to the immune system. The chain is Beta-2-microglobulin (B2M) from Callicebus personatus personatus (Masked titi).